Consider the following 89-residue polypeptide: UPF0298 protein GK1096 (89 aa).

This sequence belongs to the UPF0298 family.

The protein localises to the cytoplasm. This is UPF0298 protein GK1096 from Geobacillus kaustophilus (strain HTA426).